A 331-amino-acid polypeptide reads, in one-letter code: Putative heme-binding peroxidase (331 aa).

His-50 acts as the Proton acceptor in catalysis. His-174 is a binding site for heme b. Residue Trp-190 is the Tryptophan radical intermediate of the active site. The tract at residues 288-331 is disordered; it reads INTDNQKGGYRSAPKKSDSTPATSGQPGASKTGGCPVMHHKAKL. Residues 306–316 show a composition bias toward polar residues; it reads STPATSGQPGA.

The protein belongs to the peroxidase family. Cytochrome c peroxidase subfamily. It depends on heme b as a cofactor.

Destroys radicals which are normally produced within the cells and which are toxic to biological systems. The sequence is that of Putative heme-binding peroxidase from Gibberella zeae (strain ATCC MYA-4620 / CBS 123657 / FGSC 9075 / NRRL 31084 / PH-1) (Wheat head blight fungus).